The following is a 366-amino-acid chain: Endophilin-B1 (366 aa).

Residues M1–L30 form a membrane-binding amphipathic helix region. The segment at M1 to E37 is required for membrane binding. In terms of domain architecture, BAR spans E27–S261. 2 coiled-coil regions span residues E34–Q54 and K160–A185. An SH3 domain is found at S306 to N366.

The protein belongs to the endophilin family. As to quaternary structure, homodimer, and heterodimer with SH3GLB2. Binds BAX. Binds DNM1, HTT, AMPH, BIN1 and ARFGAP1.

Its subcellular location is the cytoplasm. The protein resides in the golgi apparatus membrane. It is found in the mitochondrion outer membrane. May be required for normal outer mitochondrial membrane dynamics. Required for coatomer-mediated retrograde transport in certain cells. May recruit other proteins to membranes with high curvature. May promote membrane fusion. This chain is Endophilin-B1, found in Gallus gallus (Chicken).